The primary structure comprises 182 residues: Thioredoxin X, chloroplastic (182 aa).

A chloroplast-targeting transit peptide spans 1 to 67 (MDSIVSSSTI…TRKSSSSVIR (67 aa)). Residues 68–177 (CGGIKEIGES…LKEYIDGLLN (110 aa)) enclose the Thioredoxin domain. Catalysis depends on nucleophile residues Cys-99 and Cys-102. An intrachain disulfide couples Cys-99 to Cys-102.

This sequence belongs to the thioredoxin family. In terms of tissue distribution, predominantly expressed in leaves.

It is found in the plastid. It localises to the chloroplast stroma. Its function is as follows. Probable thiol-disulfide oxidoreductase that may participate in various redox reactions. The protein is Thioredoxin X, chloroplastic (ATHX) of Arabidopsis thaliana (Mouse-ear cress).